The following is a 44-amino-acid chain: uncharacterized protein (44 aa).

This is an uncharacterized protein from Bacillus subtilis (Bacteriophage phi-105).